The following is a 458-amino-acid chain: D-inositol 3-phosphate glycosyltransferase (458 aa).

Histidine 16 is a binding site for 1D-myo-inositol 3-phosphate. UDP-N-acetyl-alpha-D-glucosamine-binding positions include 22–23 and glycine 30; that span reads QP. 1D-myo-inositol 3-phosphate-binding positions include 27 to 32, lysine 85, tyrosine 118, threonine 142, and arginine 162; that span reads DAGGMN. Positions 236, 241, and 302 each coordinate UDP-N-acetyl-alpha-D-glucosamine. Mg(2+)-binding residues include tyrosine 311, arginine 312, and serine 314. Glutamate 324 and glutamate 332 together coordinate UDP-N-acetyl-alpha-D-glucosamine. Threonine 338 serves as a coordination point for Mg(2+). A disordered region spans residues 428–458; the sequence is VAAQNVTGSSSRTRRPWRRRRSTLLPMTGRS. Residues 439-449 show a composition bias toward basic residues; it reads RTRRPWRRRRS.

Belongs to the glycosyltransferase group 1 family. MshA subfamily. Homodimer.

It catalyses the reaction 1D-myo-inositol 3-phosphate + UDP-N-acetyl-alpha-D-glucosamine = 1D-myo-inositol 2-acetamido-2-deoxy-alpha-D-glucopyranoside 3-phosphate + UDP + H(+). In terms of biological role, catalyzes the transfer of a N-acetyl-glucosamine moiety to 1D-myo-inositol 3-phosphate to produce 1D-myo-inositol 2-acetamido-2-deoxy-glucopyranoside 3-phosphate in the mycothiol biosynthesis pathway. This Gordonia bronchialis (strain ATCC 25592 / DSM 43247 / BCRC 13721 / JCM 3198 / KCTC 3076 / NBRC 16047 / NCTC 10667) (Rhodococcus bronchialis) protein is D-inositol 3-phosphate glycosyltransferase.